A 243-amino-acid polypeptide reads, in one-letter code: Anti-H(O) lectin 1 (243 aa).

N-linked (GlcNAc...) asparagine; partial glycosylation occurs at N10. A glycan (N-linked (GlcNAc...) asparagine) is linked at N116. Residues E126 and D128 each coordinate Mn(2+). Ca(2+) contacts are provided by D128, N135, and D138. Mn(2+) is bound by residues D138 and H143.

Belongs to the leguminous lectin family.

Functionally, L-fucose specific lectin. The protein is Anti-H(O) lectin 1 of Ulex europaeus (Furze).